Reading from the N-terminus, the 297-residue chain is Nucleotide-binding protein Bsph_0448 (297 aa).

Position 19–26 (19–26 (GMSGAGKT)) interacts with ATP. 70–73 (DMRG) contacts GTP.

Belongs to the RapZ-like family.

In terms of biological role, displays ATPase and GTPase activities. The sequence is that of Nucleotide-binding protein Bsph_0448 from Lysinibacillus sphaericus (strain C3-41).